Reading from the N-terminus, the 690-residue chain is Glycine--tRNA ligase beta subunit (690 aa).

This sequence belongs to the class-II aminoacyl-tRNA synthetase family. In terms of assembly, tetramer of two alpha and two beta subunits.

The protein localises to the cytoplasm. The catalysed reaction is tRNA(Gly) + glycine + ATP = glycyl-tRNA(Gly) + AMP + diphosphate. This is Glycine--tRNA ligase beta subunit from Tolumonas auensis (strain DSM 9187 / NBRC 110442 / TA 4).